A 300-amino-acid polypeptide reads, in one-letter code: 7-methylguanosine phosphate-specific 5'-nucleotidase (300 aa).

The active-site Nucleophile is D41. Mg(2+) contacts are provided by D41 and D43. The Proton donor role is filled by D43. E88 lines the CMP pocket. N(7)-methyl-GMP is bound at residue E88. Substrate is bound by residues 156-157 and K205; that span reads SA. D230 is a binding site for Mg(2+). At K256 the chain carries N6-acetyllysine.

This sequence belongs to the pyrimidine 5'-nucleotidase family. Monomer.

Its subcellular location is the cytoplasm. It carries out the reaction N(7)-methyl-GMP + H2O = N(7)-methylguanosine + phosphate. The catalysed reaction is CMP + H2O = cytidine + phosphate. The enzyme catalyses a ribonucleoside 5'-phosphate + H2O = a ribonucleoside + phosphate. Specifically hydrolyzes 7-methylguanosine monophosphate (m(7)GMP) to 7-methylguanosine and inorganic phosphate. The specific activity for m(7)GMP may protect cells against undesired salvage of m(7)GMP and its incorporation into nucleic acids. Also has weak activity for CMP. UMP and purine nucleotides are poor substrates. The protein is 7-methylguanosine phosphate-specific 5'-nucleotidase (Nt5c3b) of Rattus norvegicus (Rat).